We begin with the raw amino-acid sequence, 122 residues long: Large ribosomal subunit protein uL14 (122 aa).

The protein belongs to the universal ribosomal protein uL14 family. As to quaternary structure, part of the 50S ribosomal subunit. Forms a cluster with proteins L3 and L19. In the 70S ribosome, L14 and L19 interact and together make contacts with the 16S rRNA in bridges B5 and B8.

In terms of biological role, binds to 23S rRNA. Forms part of two intersubunit bridges in the 70S ribosome. This is Large ribosomal subunit protein uL14 from Leifsonia xyli subsp. xyli (strain CTCB07).